Here is a 388-residue protein sequence, read N- to C-terminus: Spermosin (388 aa).

The N-terminal stretch at 1–22 is a signal peptide; sequence MAAINVIFISGAIALFALTGSC. A compositionally biased stretch (polar residues) spans 29 to 49; that stretch reads FTNKPYATQNPYSPPQTNQPT. The disordered stretch occupies residues 29–98; it reads FTNKPYATQN…SENSESENSE (70 aa). Positions 54-64 are enriched in pro residues; the sequence is QPGPAPTPAPY. 5 cysteine pairs are disulfide-bonded: Cys-116–Cys-251, Cys-163–Cys-179, Cys-265–Cys-330, Cys-295–Cys-310, and Cys-320–Cys-349. The 243-residue stretch at 130–372 folds into the Peptidase S1 domain; sequence IVGGAEAVPN…NLEWLCCYMP (243 aa). Residues His-178 and Asp-231 each act as charge relay system in the active site. The active-site Charge relay system is Ser-324.

It belongs to the peptidase S1 family. In terms of assembly, heterodimer of a heavy chain and either an L1 light chain or an L2 light chain linked by a disulfide bond. As to expression, detected in sperm, but not in unfertilized eggs (at protein level). Expressed in gonad, but not in hepatopancreas, intestine or branchial basket.

It localises to the secreted. It carries out the reaction Hydrolyzes arginyl bonds, preferably with Pro in the P2 position.. With respect to regulation, inhibited by peptidyl-argininals with Pro in the P2 position, diisopropyl fluorophosphate, phenylmethanesulfonyl fluoride, leupeptin, antipain, soybean trypsin inhibitor, aprotinin, ovomucoid, valyl-prolyl-arginyl-chloromethane, glycyl-valyl-arginyl-chloromethane, p-aminobenzamidine, benzamidine, zinc chloride and mercuric chloride. Trypsin-like protease with a narrow substrate specificity. Preferentially hydrolyzes substrates with Pro in the P2 position and Val in the P3 position. Plays a role in fertilization. The sequence is that of Spermosin from Halocynthia roretzi (Sea squirt).